Consider the following 507-residue polypeptide: DNA nucleotidylexotransferase (507 aa).

Positions 11–17 (PLRKKAK) match the Nuclear localization signal motif. The BRCT domain maps to 27 to 124 (QHNVKFKEIV…RPVEIQNRHL (98 aa)). The involved in DNA binding stretch occupies residues 254–258 (VGLKT). A 2'-deoxyribonucleoside 5'-triphosphate contacts are provided by residues 329–334 (GFRRGK) and 338–341 (HDVD). Mg(2+) contacts are provided by aspartate 339, aspartate 341, and aspartate 431. 446-447 (GW) is a binding site for a 2'-deoxyribonucleoside 5'-triphosphate.

The protein belongs to the DNA polymerase type-X family. The cofactor is Mg(2+). Found in the thymus and not in the spleen, kidney, intestine, or liver.

Its subcellular location is the nucleus. The catalysed reaction is DNA(n) + a 2'-deoxyribonucleoside 5'-triphosphate = DNA(n+1) + diphosphate. Its function is as follows. Template-independent DNA polymerase which catalyzes the random addition of deoxynucleoside 5'-triphosphate to the 3'-end of a DNA initiator. One of the in vivo functions of this enzyme is the addition of nucleotides at the junction (N region) of rearranged Ig heavy chain and T-cell receptor gene segments during the maturation of B- and T-cells. This Xenopus laevis (African clawed frog) protein is DNA nucleotidylexotransferase (dntt).